We begin with the raw amino-acid sequence, 130 residues long: Calcium-binding protein KRP1 (130 aa).

The region spanning 72–107 (LTDEDVRCMIKEGDFDCDGALNQMEFCVLMFRLSPD) is the EF-hand domain. Residues D85, D87, D89, and E96 each coordinate Ca(2+).

Potential calcium sensor that binds calcium in vitro. This chain is Calcium-binding protein KRP1, found in Arabidopsis thaliana (Mouse-ear cress).